A 103-amino-acid chain; its full sequence is Histone H4 (103 aa).

The residue at position 6 (K6) is an N6-acetyl-N6-methyllysine; alternate. Residues K6, K9, and K13 each carry the N6-methyllysine; alternate modification. Position 13 is an N6-acetyl-N6-methyllysine; alternate (K13). Residues 17–21 (KRHRK) mediate DNA binding. N6-glutaryllysine is present on K92.

This sequence belongs to the histone H4 family. In terms of assembly, the nucleosome is a histone octamer containing two molecules each of H2A, H2B, H3 and H4 assembled in one H3-H4 heterotetramer and two H2A-H2B heterodimers. The octamer wraps approximately 147 bp of DNA. Glutarylation at Lys-92 (H4K91glu) destabilizes nucleosomes by promoting dissociation of the H2A-H2B dimers from nucleosomes.

It localises to the nucleus. Its subcellular location is the chromosome. Core component of nucleosome. Nucleosomes wrap and compact DNA into chromatin, limiting DNA accessibility to the cellular machineries which require DNA as a template. Histones thereby play a central role in transcription regulation, DNA repair, DNA replication and chromosomal stability. DNA accessibility is regulated via a complex set of post-translational modifications of histones, also called histone code, and nucleosome remodeling. The sequence is that of Histone H4 (ahsb4) from Blastobotrys adeninivorans (Yeast).